A 776-amino-acid polypeptide reads, in one-letter code: Disintegrin and metalloproteinase domain-containing protein 7 (776 aa).

A signal peptide spans 1-23; sequence MLPGCIFLMILLILQVKEKVILG. The propeptide occupies 24–176; that stretch reads VEGQQLVYPK…NYSCTELNFT (153 aa). Topologically, residues 26–669 are extracellular; that stretch reads GQQLVYPKKL…WEETLNVTNV (644 aa). Asparagine 84, asparagine 167, and asparagine 174 each carry an N-linked (GlcNAc...) asparagine glycan. The Peptidase M12B domain maps to 199-394; sequence KYIELFIVAD…YKPTCMLNIP (196 aa). 4 disulfides stabilise this stretch: cysteine 310-cysteine 389, cysteine 350-cysteine 373, cysteine 352-cysteine 357, and cysteine 460-cysteine 480. The Disintegrin domain maps to 402 to 488; that stretch reads FQFCGNKKLD…ACPKDQFRVN (87 aa). N-linked (GlcNAc...) asparagine glycosylation is found at asparagine 584, asparagine 629, and asparagine 665. A helical membrane pass occupies residues 670 to 690; sequence AILIVVLVLVIVGIGVLILLI. Topologically, residues 691 to 776 are cytoplasmic; the sequence is RYQKCIKLKQ…GIADPNQSAK (86 aa). Positions 757 to 776 are disordered; sequence TLKPASKDSRGIADPNQSAK.

In terms of assembly, interacts with ITM2B in sperm; the interaction increases following capacitation. Interacts with HSPA5 and CANX.

It is found in the membrane. Its function is as follows. Required for normal male fertility via maintenance of epithelial cell morphology in the caput epididymis and subsequently correct epididymis lumen structure required for sperm development. Plays a role in sperm motility, flagella morphology and tyrosine phosphorylation during sperm capacitance. Plays a role in normal expression levels of HSPA5, ITM2B and ADAM2 in sperm both prior to and post-capacitation. This is a non catalytic metalloprotease-like protein. The chain is Disintegrin and metalloproteinase domain-containing protein 7 (ADAM7) from Macaca fascicularis (Crab-eating macaque).